The primary structure comprises 444 residues: C4-dicarboxylate transport protein (444 aa).

8 consecutive transmembrane segments (helical) span residues 19 to 39 (HLYF…HFYP), 55 to 75 (LVKM…IAGM), 90 to 110 (IYFL…SNIL), 161 to 181 (ILQV…VGDL), 199 to 219 (LVAI…AFTI), 230 to 250 (LAFL…VVLG), 343 to 363 (LLLV…AGFI), and 366 to 386 (AATL…ILGI).

The protein belongs to the dicarboxylate/amino acid:cation symporter (DAACS) (TC 2.A.23) family.

Its subcellular location is the cell inner membrane. Its function is as follows. Responsible for the transport of dicarboxylates such as succinate, fumarate, and malate from the periplasm across the membrane. This chain is C4-dicarboxylate transport protein, found in Allorhizobium ampelinum (strain ATCC BAA-846 / DSM 112012 / S4) (Agrobacterium vitis (strain S4)).